The primary structure comprises 269 residues: 3-methyl-2-oxobutanoate hydroxymethyltransferase (269 aa).

The Mg(2+) site is built by aspartate 48 and aspartate 87. Residues 48 to 49 (DS), aspartate 87, and lysine 116 each bind 3-methyl-2-oxobutanoate. Glutamate 118 provides a ligand contact to Mg(2+). Glutamate 185 serves as the catalytic Proton acceptor.

This sequence belongs to the PanB family. Homodecamer; pentamer of dimers. Mg(2+) serves as cofactor.

It localises to the cytoplasm. The catalysed reaction is 3-methyl-2-oxobutanoate + (6R)-5,10-methylene-5,6,7,8-tetrahydrofolate + H2O = 2-dehydropantoate + (6S)-5,6,7,8-tetrahydrofolate. The protein operates within cofactor biosynthesis; (R)-pantothenate biosynthesis; (R)-pantoate from 3-methyl-2-oxobutanoate: step 1/2. Functionally, catalyzes the reversible reaction in which hydroxymethyl group from 5,10-methylenetetrahydrofolate is transferred onto alpha-ketoisovalerate to form ketopantoate. This Campylobacter curvus (strain 525.92) protein is 3-methyl-2-oxobutanoate hydroxymethyltransferase.